We begin with the raw amino-acid sequence, 308 residues long: uncharacterized protein (308 aa).

Residues 6–234 (LHIEGLDKKI…TEKAIIEVQP (229 aa)) form the ABC transporter domain. Residue 38-45 (GPNGSGKT) participates in ATP binding.

The protein belongs to the ABC transporter superfamily.

This is an uncharacterized protein from Bacillus subtilis (strain 168).